Here is a 572-residue protein sequence, read N- to C-terminus: Periplasmic pectate lyase (572 aa).

The signal sequence occupies residues 1–23; the sequence is MKKRALLLSMSVLAMLYIPAGQA.

It belongs to the polysaccharide lyase 2 family.

Its subcellular location is the periplasm. It catalyses the reaction Eliminative cleavage of (1-&gt;4)-alpha-D-galacturonan to give oligosaccharides with 4-deoxy-alpha-D-galact-4-enuronosyl groups at their non-reducing ends.. It functions in the pathway glycan metabolism; pectin degradation; 2-dehydro-3-deoxy-D-gluconate from pectin: step 2/5. This is Periplasmic pectate lyase (pelY) from Yersinia pseudotuberculosis serotype I (strain IP32953).